The following is a 256-amino-acid chain: Ribonuclease HII (256 aa).

One can recognise an RNase H type-2 domain in the interval 72–256 (QYVAGIDEVG…TFRPVPDYVN (185 aa)). Residues D78, E79, and D170 each coordinate a divalent metal cation.

This sequence belongs to the RNase HII family. Mn(2+) is required as a cofactor. The cofactor is Mg(2+).

It localises to the cytoplasm. It carries out the reaction Endonucleolytic cleavage to 5'-phosphomonoester.. Endonuclease that specifically degrades the RNA of RNA-DNA hybrids. The sequence is that of Ribonuclease HII from Limosilactobacillus fermentum (strain NBRC 3956 / LMG 18251) (Lactobacillus fermentum).